The sequence spans 363 residues: Dihydroorotate dehydrogenase (quinone) (363 aa).

Residues 62–66 (AGYDK) and T86 contribute to the FMN site. Position 66 (K66) interacts with substrate. Residue 111–115 (NRLGF) participates in substrate binding. FMN is bound by residues N140 and N171. N171 contacts substrate. The Nucleophile role is filled by S174. N176 is a binding site for substrate. FMN-binding residues include K216 and S244. 245–246 (NT) is a substrate binding site. Residues G267, G296, and 317 to 318 (YS) each bind FMN.

This sequence belongs to the dihydroorotate dehydrogenase family. Type 2 subfamily. In terms of assembly, monomer. It depends on FMN as a cofactor.

It is found in the cell membrane. It carries out the reaction (S)-dihydroorotate + a quinone = orotate + a quinol. Its pathway is pyrimidine metabolism; UMP biosynthesis via de novo pathway; orotate from (S)-dihydroorotate (quinone route): step 1/1. Functionally, catalyzes the conversion of dihydroorotate to orotate with quinone as electron acceptor. The polypeptide is Dihydroorotate dehydrogenase (quinone) (Allorhizobium ampelinum (strain ATCC BAA-846 / DSM 112012 / S4) (Agrobacterium vitis (strain S4))).